A 284-amino-acid polypeptide reads, in one-letter code: 2-dehydro-3-deoxyphosphooctonate aldolase (284 aa).

It belongs to the KdsA family.

The protein localises to the cytoplasm. The catalysed reaction is D-arabinose 5-phosphate + phosphoenolpyruvate + H2O = 3-deoxy-alpha-D-manno-2-octulosonate-8-phosphate + phosphate. It participates in carbohydrate biosynthesis; 3-deoxy-D-manno-octulosonate biosynthesis; 3-deoxy-D-manno-octulosonate from D-ribulose 5-phosphate: step 2/3. It functions in the pathway bacterial outer membrane biogenesis; lipopolysaccharide biosynthesis. The protein is 2-dehydro-3-deoxyphosphooctonate aldolase of Burkholderia vietnamiensis (strain G4 / LMG 22486) (Burkholderia cepacia (strain R1808)).